The sequence spans 262 residues: Acyl-[acyl-carrier-protein]--UDP-N-acetylglucosamine O-acyltransferase (262 aa).

This sequence belongs to the transferase hexapeptide repeat family. LpxA subfamily. Homotrimer.

The protein localises to the cytoplasm. It carries out the reaction a (3R)-hydroxyacyl-[ACP] + UDP-N-acetyl-alpha-D-glucosamine = a UDP-3-O-[(3R)-3-hydroxyacyl]-N-acetyl-alpha-D-glucosamine + holo-[ACP]. The protein operates within glycolipid biosynthesis; lipid IV(A) biosynthesis; lipid IV(A) from (3R)-3-hydroxytetradecanoyl-[acyl-carrier-protein] and UDP-N-acetyl-alpha-D-glucosamine: step 1/6. In terms of biological role, involved in the biosynthesis of lipid A, a phosphorylated glycolipid that anchors the lipopolysaccharide to the outer membrane of the cell. In Salmonella paratyphi B (strain ATCC BAA-1250 / SPB7), this protein is Acyl-[acyl-carrier-protein]--UDP-N-acetylglucosamine O-acyltransferase.